Here is a 267-residue protein sequence, read N- to C-terminus: 3-deoxy-manno-octulosonate cytidylyltransferase (267 aa).

This sequence belongs to the KdsB family.

Its subcellular location is the cytoplasm. It carries out the reaction 3-deoxy-alpha-D-manno-oct-2-ulosonate + CTP = CMP-3-deoxy-beta-D-manno-octulosonate + diphosphate. It participates in nucleotide-sugar biosynthesis; CMP-3-deoxy-D-manno-octulosonate biosynthesis; CMP-3-deoxy-D-manno-octulosonate from 3-deoxy-D-manno-octulosonate and CTP: step 1/1. The protein operates within bacterial outer membrane biogenesis; lipopolysaccharide biosynthesis. Activates KDO (a required 8-carbon sugar) for incorporation into bacterial lipopolysaccharide in Gram-negative bacteria. This is 3-deoxy-manno-octulosonate cytidylyltransferase from Paraburkholderia phymatum (strain DSM 17167 / CIP 108236 / LMG 21445 / STM815) (Burkholderia phymatum).